The sequence spans 196 residues: Holliday junction branch migration complex subunit RuvA (196 aa).

The segment at 1–63 (MISFVSGRVA…EDSLTLYGFA (63 aa)) is domain I. A domain II region spans residues 64–136 (DDDERTVFEL…LKDRLGTPST (73 aa)). The segment at 136–140 (TAAAE) is flexible linker. The domain III stretch occupies residues 141–196 (STSGWRDAVHAGLLNLGYTARQADEAIAAIAGELDDSAAVDTATALRLALATLKRP).

Belongs to the RuvA family. In terms of assembly, homotetramer. Forms an RuvA(8)-RuvB(12)-Holliday junction (HJ) complex. HJ DNA is sandwiched between 2 RuvA tetramers; dsDNA enters through RuvA and exits via RuvB. An RuvB hexamer assembles on each DNA strand where it exits the tetramer. Each RuvB hexamer is contacted by two RuvA subunits (via domain III) on 2 adjacent RuvB subunits; this complex drives branch migration. In the full resolvosome a probable DNA-RuvA(4)-RuvB(12)-RuvC(2) complex forms which resolves the HJ.

Its subcellular location is the cytoplasm. The RuvA-RuvB-RuvC complex processes Holliday junction (HJ) DNA during genetic recombination and DNA repair, while the RuvA-RuvB complex plays an important role in the rescue of blocked DNA replication forks via replication fork reversal (RFR). RuvA specifically binds to HJ cruciform DNA, conferring on it an open structure. The RuvB hexamer acts as an ATP-dependent pump, pulling dsDNA into and through the RuvAB complex. HJ branch migration allows RuvC to scan DNA until it finds its consensus sequence, where it cleaves and resolves the cruciform DNA. The protein is Holliday junction branch migration complex subunit RuvA of Acidothermus cellulolyticus (strain ATCC 43068 / DSM 8971 / 11B).